Consider the following 429-residue polypeptide: Adenylosuccinate synthetase (429 aa).

GTP is bound by residues 12–18 (GDEGKGK) and 40–42 (GHT). Residue D13 is the Proton acceptor of the active site. The Mg(2+) site is built by D13 and G40. IMP is bound by residues 13–16 (DEGK), 38–41 (NAGH), T128, R142, Q223, T238, and R302. The active-site Proton donor is H41. 298–304 (TTTGRPR) lines the substrate pocket. Residues R304, 330–332 (SID), and 412–414 (SVG) each bind GTP.

The protein belongs to the adenylosuccinate synthetase family. Homodimer. Mg(2+) serves as cofactor.

It is found in the cytoplasm. It catalyses the reaction IMP + L-aspartate + GTP = N(6)-(1,2-dicarboxyethyl)-AMP + GDP + phosphate + 2 H(+). It functions in the pathway purine metabolism; AMP biosynthesis via de novo pathway; AMP from IMP: step 1/2. Plays an important role in the de novo pathway of purine nucleotide biosynthesis. Catalyzes the first committed step in the biosynthesis of AMP from IMP. In Bacillus cereus (strain ATCC 10987 / NRS 248), this protein is Adenylosuccinate synthetase.